We begin with the raw amino-acid sequence, 177 residues long: Nucleoside triphosphate/diphosphate phosphatase (177 aa).

The active-site Proton donor is arginine 23. Positions 87, 103, 105, 107, 120, and 123 each coordinate Mg(2+).

This sequence belongs to the Ntdp family. Mg(2+) serves as cofactor.

The catalysed reaction is a ribonucleoside 5'-triphosphate + H2O = a ribonucleoside 5'-diphosphate + phosphate + H(+). It catalyses the reaction a ribonucleoside 5'-diphosphate + H2O = a ribonucleoside 5'-phosphate + phosphate + H(+). Its function is as follows. Has nucleoside phosphatase activity towards nucleoside triphosphates and nucleoside diphosphates. This is Nucleoside triphosphate/diphosphate phosphatase from Streptococcus pyogenes serotype M3 (strain ATCC BAA-595 / MGAS315).